The following is a 1010-amino-acid chain: Sodium/potassium-transporting ATPase subunit alpha-3 (1010 aa).

Positions 1 to 21 (MGDKGEKESPKKGKGKRDLDD) are disordered. Residues 1–74 (MGDKGEKESP…NALTPPPTTP (74 aa)) are Cytoplasmic-facing. The tract at residues 69 to 71 (PPP) is interaction with phosphoinositide-3 kinase. Residues 75–95 (EWVKFCRQLFGGFSILLWIGA) form a helical membrane-spanning segment. At 96–118 (ILCFLAYGIQAGTEDEPSNDNLY) the chain is on the extracellular side. Residues 119 to 139 (LGIVLAAVVIITGCFSYYQEA) traverse the membrane as a helical segment. Residues 140–275 (KSSKIMESFK…VGKTPIAVEI (136 aa)) are Cytoplasmic-facing. A helical membrane pass occupies residues 276–295 (EHFIQLITGVAVFLGISFFV). Topologically, residues 296-307 (LSLILGYTWLEA) are extracellular. A helical transmembrane segment spans residues 308 to 325 (VIFLIGIIVANVPEGLLA). Topologically, residues 326–759 (TVTVCLTLTA…EEGRLIFDNL (434 aa)) are cytoplasmic. The 4-aspartylphosphate intermediate role is filled by aspartate 363. Mg(2+) is bound by residues aspartate 704 and aspartate 708. The chain crosses the membrane as a helical span at residues 760 to 779 (KKSIAYTLTSNIPEITPFLL). At 780-789 (FIMANIPLPL) the chain is on the extracellular side. The helical transmembrane segment at 790–810 (GTITILCIDLGTDMVPAISLA) threads the bilayer. Residues 811–830 (YEAAESDIMKRQPRNPRSDK) lie on the Cytoplasmic side of the membrane. The chain crosses the membrane as a helical span at residues 831–853 (LVNERLISMAYGQIGMIQALGGF). Residues 854–905 (FSYFVILAENGFLPSCLVGIRLSWDDRTINDLEDSYGQQWTYEQRKVVEFTC) lie on the Extracellular side of the membrane. The helical transmembrane segment at 906–925 (HTAFFVSIVVVQWADLIICK) threads the bilayer. The Cytoplasmic portion of the chain corresponds to 926-938 (TRRNSVFQQGMKN). Serine 930 is modified (phosphoserine; by PKA). A helical transmembrane segment spans residues 939-957 (KILIFGLFEETALAAFLSY). At 958-972 (CPGMDVALRMYPLKP) the chain is on the extracellular side. The chain crosses the membrane as a helical span at residues 973-993 (SWWFCAFPYSFLIFVYDEIRK). Residues 994–1010 (LILRRNPGGWVEKETYY) are Cytoplasmic-facing.

This sequence belongs to the cation transport ATPase (P-type) (TC 3.A.3) family. Type IIC subfamily. As to quaternary structure, the sodium/potassium-transporting ATPase is composed of a catalytic alpha subunit, an auxiliary non-catalytic beta subunit and an additional regulatory subunit.

The protein resides in the cell membrane. It catalyses the reaction K(+)(out) + Na(+)(in) + ATP + H2O = K(+)(in) + Na(+)(out) + ADP + phosphate + H(+). This is the catalytic component of the active enzyme, which catalyzes the hydrolysis of ATP coupled with the exchange of sodium and potassium ions across the plasma membrane. This action creates the electrochemical gradient of sodium and potassium ions, providing the energy for active transport of various nutrients. This Gallus gallus (Chicken) protein is Sodium/potassium-transporting ATPase subunit alpha-3 (ATP1A3).